The chain runs to 327 residues: G protein pathway suppressor 2 (327 aa).

Positions 14–109 form a coiled coil; it reads MARALHRHIM…RRRKEQSDLT (96 aa). The disordered stretch occupies residues 26-65; sequence RERKRQEEEEVDKMMEQKMKEEQERRKKKEMEERMSLEET. Residues lysine 45 and lysine 71 each participate in a glycyl lysine isopeptide (Lys-Gly) (interchain with G-Cter in SUMO1) cross-link. Positions 61 to 94 are interaction with SUMO; the sequence is SLEETKEQILKLEEKLLALQEEKHQLFLQLKKVL. 2 disordered regions span residues 177-208 and 253-327; these read HGQF…SPSQ and QKQM…FYHK. The span at 253–271 shows a compositional bias: polar residues; the sequence is QKQMEHANQQTGFSDSSSL. Arginine 312 bears the Asymmetric dimethylarginine mark. Residues 317-327 are compositionally biased toward polar residues; it reads QHSQNPRFYHK. Position 323 is an asymmetric dimethylarginine; alternate (arginine 323). Arginine 323 is subject to Omega-N-methylarginine; alternate.

As to quaternary structure, component of the N-Cor repressor complex, at least composed of NCOR1, NCOR2, HDAC3, TBL1X, TBL1R, CORO2A and GPS2. Interacts (when sumoylated at Lys-71) with TBL1X; leading to protect GPS2 from degradation by the proteasome. Interacts with UBE2N; leading to inhibit UBE2N/Ubc13 activity. Interacts with TRAF1. Interacts with TRAF2. Interacts with TRAF6. Interacts with PPARG (when in the liganded conformation). Interacts with (sumoylated) NR1H2; interaction with sumoylated NR1H2 and NR5A2 onto hepatic acute phase protein promoters prevents N-Cor corepressor complex dissociation. Interacts with (sumoylated) NR5A2; interaction with sumoylated NR1H2 and NR5A2 onto hepatic acute phase protein promoters prevents N-Cor corepressor complex dissociation. Interacts with NR1H3. Interacts with RFX4. Interacts with ANKRD26. In terms of assembly, (Microbial infection) Interacts (via coiled coil domain) with hepatitis C virus (HCV) NS5A. Sumoylation regulates its subcellular location. Sumoylation at Lys-45 and Lys-71 regulates the shuttling between the cytoplasm and the nucleus. Sumoylation at Lys-71 is required for interaction with TBL1X. Sumoylated at Lys-45 and Lys-71 in mitochondrion. Desumoylation by SENP1 leads to relocation from the mitochondria to the nucleus. Post-translationally, ubiquitinated at the C-terminus by SIAH2; leading to its degradation by the proteasome. Interaction with TBL1X and methylation at Arg-323 protect GPS2 against ubiquitination and degradation. In terms of processing, methylated at Arg-312 and Arg-323 by PRMT6. Methylation at Arg-323 protects from degradation by the proteasome. As to expression, widely expressed.

Its subcellular location is the nucleus. The protein resides in the mitochondrion. It localises to the cytoplasm. It is found in the cytosol. Its function is as follows. Key regulator of inflammation, lipid metabolism and mitochondrion homeostasis that acts by inhibiting the activity of the ubiquitin-conjugating enzyme UBE2N/Ubc13, thereby inhibiting 'Lys-63'-linked ubiquitination. In the nucleus, can both acts as a corepressor and coactivator of transcription, depending on the context. Acts as a transcription coactivator in adipocytes by promoting the recruitment of PPARG to promoters: acts by inhibiting the activity of the ubiquitin-conjugating enzyme UBE2N/Ubc13, leading to stabilization of KDM4A and subsequent histone H3 'Lys-9' (H3K9) demethylation. Promotes cholesterol efflux by acting as a transcription coactivator. Acts as a regulator of B-cell development by inhibiting UBE2N/Ubc13, thereby restricting the activation of Toll-like receptors (TLRs) and B-cell antigen receptors (BCRs) signaling pathways. Acts as a key mediator of mitochondrial stress response: in response to mitochondrial depolarization, relocates from the mitochondria to the nucleus following desumoylation and specifically promotes expression of nuclear-encoded mitochondrial genes. Promotes transcription of nuclear-encoded mitochondrial genes by inhibiting UBE2N/Ubc13. Can also act as a corepressor as part of the N-Cor repressor complex by repressing active PPARG. Plays an anti-inflammatory role in macrophages and is required for insulin sensitivity by acting as a corepressor. Plays an anti-inflammatory role during the hepatic acute phase response by interacting with sumoylated NR1H2 and NR5A2 proteins, thereby preventing N-Cor corepressor complex dissociation. In the cytosol, also plays a non-transcriptional role by regulating insulin signaling and pro-inflammatory pathways. In the cytoplasm, acts as a negative regulator of inflammation by inhibiting the pro-inflammatory TNF-alpha pathway; acts by repressing UBE2N/Ubc13 activity. In the cytoplasm of adipocytes, restricts the activation of insulin signaling via inhibition of UBE2N/Ubc13-mediated ubiquitination of AKT. Able to suppress G-protein- and mitogen-activated protein kinase-mediated signal transduction. Acts as a tumor-suppressor in liposarcoma. (Microbial infection) Required for efficient replication of hepatitis C virus (HCV) by promoting the interaction between VAPA and HCV virus protein NS5A. The protein is G protein pathway suppressor 2 of Homo sapiens (Human).